The sequence spans 240 residues: UDP-2,3-diacylglucosamine hydrolase (240 aa).

Mn(2+)-binding residues include Asp-8, His-10, Asp-41, Asn-79, and His-114. Residue 79–80 coordinates substrate; the sequence is NR. Positions 122, 160, 164, 167, and 195 each coordinate substrate. Mn(2+) contacts are provided by His-195 and His-197.

It belongs to the LpxH family. Mn(2+) is required as a cofactor.

It localises to the cell inner membrane. It carries out the reaction UDP-2-N,3-O-bis[(3R)-3-hydroxytetradecanoyl]-alpha-D-glucosamine + H2O = 2-N,3-O-bis[(3R)-3-hydroxytetradecanoyl]-alpha-D-glucosaminyl 1-phosphate + UMP + 2 H(+). The protein operates within glycolipid biosynthesis; lipid IV(A) biosynthesis; lipid IV(A) from (3R)-3-hydroxytetradecanoyl-[acyl-carrier-protein] and UDP-N-acetyl-alpha-D-glucosamine: step 4/6. Functionally, hydrolyzes the pyrophosphate bond of UDP-2,3-diacylglucosamine to yield 2,3-diacylglucosamine 1-phosphate (lipid X) and UMP by catalyzing the attack of water at the alpha-P atom. Involved in the biosynthesis of lipid A, a phosphorylated glycolipid that anchors the lipopolysaccharide to the outer membrane of the cell. This chain is UDP-2,3-diacylglucosamine hydrolase, found in Photorhabdus laumondii subsp. laumondii (strain DSM 15139 / CIP 105565 / TT01) (Photorhabdus luminescens subsp. laumondii).